Reading from the N-terminus, the 1222-residue chain is Chitin synthase 4 (1222 aa).

Disordered regions lie at residues 1–101 (MSLP…ERNR) and 138–200 (TERT…KRIE). Composition is skewed to polar residues over residues 11-24 (QAYNQRSVYRNSPS) and 42-77 (NQASHQRGKSGSSFAESIGINSNTESMPLSPTSPDG). A compositionally biased stretch (basic residues) spans 182–196 (SGKIKRKSRRHSKPP). Transmembrane regions (helical) follow at residues 205 to 225 (PPTFWNVYCAIVTFWAPGFIM) and 243 to 263 (MGLISIILIIMAIVGFLTFGF). Asparagine 378, asparagine 418, and asparagine 440 each carry an N-linked (GlcNAc...) asparagine glycan. A helical transmembrane segment spans residues 513–533 (ALILSVVGVRFFLAIIFQWFI). The disordered stretch occupies residues 576–630 (TVYGSSDRSSKRASFLPTTSRFSSVGGPDIRSQGGRRMPTTMASQSTSNQLLTPN). The segment covering 616 to 630 (TMASQSTSNQLLTPN) has biased composition (polar residues). N-linked (GlcNAc...) asparagine glycosylation is found at asparagine 637 and asparagine 1030. The next 3 membrane-spanning stretches (helical) occupy residues 1055–1075 (FIIFVELVGTLVLPAAIAFTF), 1089–1109 (IIPLVLLGLILGLPGLLVIIT), and 1113–1133 (WSYIVWMLIYLLALPIWNFVL). A disordered region spans residues 1202-1222 (GGQTWTSPPGHQYNEEYYSDA).

The protein belongs to the chitin synthase family. Class IV subfamily.

It is found in the cell membrane. The enzyme catalyses [(1-&gt;4)-N-acetyl-beta-D-glucosaminyl](n) + UDP-N-acetyl-alpha-D-glucosamine = [(1-&gt;4)-N-acetyl-beta-D-glucosaminyl](n+1) + UDP + H(+). Functionally, polymerizes chitin, a structural polymer of the cell wall and septum, by transferring the sugar moiety of UDP-GlcNAc to the non-reducing end of the growing chitin polymer. Shows additive effects in septum formation with CHS1, CHS2, CHS3A, CHS5, CHS6 and CHS7. Regulates conidiation. Involved in virulence and mediates mycotoxin deoxinivalenol (DON) biosynthesis via the regulation of the expression of TRI4, TRI5 and TRI6. This Gibberella zeae (strain ATCC MYA-4620 / CBS 123657 / FGSC 9075 / NRRL 31084 / PH-1) (Wheat head blight fungus) protein is Chitin synthase 4.